We begin with the raw amino-acid sequence, 208 residues long: TM2 domain-containing protein 1 (208 aa).

Positions 1–37 (MAAAWPAGRASPAAGPPGLLRTLWLVTVAAGHCGAAA) are cleaved as a signal peptide. Topologically, residues 38-129 (SGAVGGEETP…YSYKVAVALS (92 aa)) are extracellular. N-linked (GlcNAc...) asparagine glycosylation is found at asparagine 73, asparagine 76, and asparagine 97. Residues 119–167 (GYSYKVAVALSLFLGWLGADRFYLGYPALGLLKFCTVGFCGIGSLIDFI) form the TM2 domain. The chain crosses the membrane as a helical span at residues 130-150 (LFLGWLGADRFYLGYPALGLL). At 151–154 (KFCT) the chain is on the cytoplasmic side. A helical transmembrane segment spans residues 155 to 175 (VGFCGIGSLIDFILISMQIVG). Over 176–208 (PSDGSSYIIDYYGTRLTRLSITNETFRKTQLYP) the chain is Extracellular. N-linked (GlcNAc...) asparagine glycosylation is present at asparagine 198.

Belongs to the TM2 family. Interacts with APP beta-APP42 (amyloid-beta protein 42). N-glycosylated.

The protein localises to the membrane. Its function is as follows. May participate in amyloid-beta-induced apoptosis via its interaction with beta-APP42. This Mus musculus (Mouse) protein is TM2 domain-containing protein 1 (Tm2d1).